Here is a 417-residue protein sequence, read N- to C-terminus: Synaptic vesicle membrane protein VAT-1 homolog-like (417 aa).

Disordered regions lie at residues 1–33 (MAKE…GSHR) and 382–417 (PTPL…PFIQ). Phosphoserine is present on S390. Phosphothreonine occurs at positions 391 and 393. At S394 the chain carries Phosphoserine. The segment covering 395–405 (EAGEEEEDHEG) has biased composition (acidic residues). Residues 406 to 417 (DSENKERMPFIQ) are compositionally biased toward basic and acidic residues.

Belongs to the zinc-containing alcohol dehydrogenase family. Quinone oxidoreductase subfamily.

This is Synaptic vesicle membrane protein VAT-1 homolog-like (Vat1l) from Mus musculus (Mouse).